The chain runs to 271 residues: Large ribosomal subunit protein uL15c (271 aa).

2 disordered regions span residues 1–21 (MASL…NNYP) and 66–120 (SNVS…QKSR). The N-terminal 61 residues, 1–61 (MASLLSLSST…KESTRLVVVA (61 aa)), are a transit peptide targeting the chloroplast. The span at 66-76 (SNVSPSIGSGS) shows a compositional bias: low complexity. The span at 91–101 (SRKKGKRKGRG) shows a compositional bias: basic residues. Gly residues predominate over residues 102–114 (HAAGQGGSCGFGM).

In terms of assembly, component of the chloroplast large ribosomal subunit (LSU). Mature 70S chloroplast ribosomes of higher plants consist of a small (30S) and a large (50S) subunit. The 30S small subunit contains 1 molecule of ribosomal RNA (16S rRNA) and 24 different proteins. The 50S large subunit contains 3 rRNA molecules (23S, 5S and 4.5S rRNA) and 33 different proteins.

It is found in the plastid. Its subcellular location is the chloroplast. In terms of biological role, component of the chloroplast ribosome (chloro-ribosome), a dedicated translation machinery responsible for the synthesis of chloroplast genome-encoded proteins, including proteins of the transcription and translation machinery and components of the photosynthetic apparatus. This chain is Large ribosomal subunit protein uL15c (RPL15), found in Spinacia oleracea (Spinach).